A 323-amino-acid polypeptide reads, in one-letter code: Putative ABC transporter substrate-binding lipoprotein YhfQ (323 aa).

Residues 1 to 19 (MKKTLIILTVLLLSVLTAA) form the signal peptide. C20 is lipidated: N-palmitoyl cysteine. C20 carries the S-diacylglycerol cysteine lipid modification. Positions 51 to 322 (RVVVLELGFI…ELQKEMPAAK (272 aa)) constitute a Fe/B12 periplasmic-binding domain.

The protein belongs to the bacterial solute-binding protein 8 family. As to quaternary structure, interacts with FloT.

It localises to the cell membrane. Its subcellular location is the membrane raft. The sequence is that of Putative ABC transporter substrate-binding lipoprotein YhfQ (yhfQ) from Bacillus subtilis (strain 168).